Here is a 217-residue protein sequence, read N- to C-terminus: Thiopurine S-methyltransferase (217 aa).

S-adenosyl-L-methionine is bound by residues Trp-10, Leu-45, Glu-66, and Arg-123.

It belongs to the class I-like SAM-binding methyltransferase superfamily. TPMT family.

It localises to the cytoplasm. It catalyses the reaction S-adenosyl-L-methionine + a thiopurine = S-adenosyl-L-homocysteine + a thiopurine S-methylether.. The chain is Thiopurine S-methyltransferase from Pseudomonas fluorescens (strain Pf0-1).